A 303-amino-acid polypeptide reads, in one-letter code: Coenzyme PQQ synthesis protein B (303 aa).

This sequence belongs to the PqqB family.

The protein operates within cofactor biosynthesis; pyrroloquinoline quinone biosynthesis. May be involved in the transport of PQQ or its precursor to the periplasm. The protein is Coenzyme PQQ synthesis protein B of Pseudomonas putida (strain ATCC 700007 / DSM 6899 / JCM 31910 / BCRC 17059 / LMG 24140 / F1).